A 576-amino-acid chain; its full sequence is (E,E)-alpha-farnesene synthase (576 aa).

R289, D326, D330, R468, and N471 together coordinate (2E,6E)-farnesyl diphosphate. Mg(2+) contacts are provided by D326 and D330. Residues 326–330 (DDVYD) carry the DDXXD motif motif. Mg(2+)-binding residues include N471, T475, and E479. Residues D484 and S487 each contribute to the K(+) site.

This sequence belongs to the terpene synthase family. Tpsb subfamily. As to quaternary structure, monomer. Requires Mg(2+) as cofactor. It depends on Mn(2+) as a cofactor. K(+) is required as a cofactor.

It is found in the cytoplasm. It catalyses the reaction (2E,6E)-farnesyl diphosphate = (3E,6E)-alpha-farnesene + diphosphate. Sesquiterpene synthase catalyzing the production of (E,E)-alpha-farnesene, the predominant terpene produced during storage of fruits. Produces all six isomers (E,E)-alpha-farnesene, (Z,E)-alpha-farnesene, (E,Z)-alpha-farnesene, (Z,Z)-alpha-farnesene, (E)-beta-farnesene and (Z)-beta-farnesene from a mix of isomeric forms of the farnesyl diphosphate precursor. Able to convert geranyl diphosphate to the monoterpenes (E)-beta-ocimene, linalool and beta-myrcene. Also has a prenyltransferase activity producing alpha-farnesene directly from geranyl diphosphate and isoprenyl diphosphate. The chain is (E,E)-alpha-farnesene synthase (AFS1) from Malus domestica (Apple).